We begin with the raw amino-acid sequence, 872 residues long: Leucine--tRNA ligase (872 aa).

Positions 42–52 (PYPSGNLHMGH) match the 'HIGH' region motif. The short motif at 631–635 (KMSKS) is the 'KMSKS' region element. K634 provides a ligand contact to ATP.

This sequence belongs to the class-I aminoacyl-tRNA synthetase family.

Its subcellular location is the cytoplasm. It catalyses the reaction tRNA(Leu) + L-leucine + ATP = L-leucyl-tRNA(Leu) + AMP + diphosphate. In Blochmanniella pennsylvanica (strain BPEN), this protein is Leucine--tRNA ligase.